We begin with the raw amino-acid sequence, 434 residues long: Zinc finger CCCH domain-containing protein 10 (434 aa).

A disordered region spans residues 1–37 (MPDRDSYANGTGSSGGGPGGGGSEEASGAGVGSGGAS). Residues 12 to 35 (GSSGGGPGGGGSEEASGAGVGSGG) are compositionally biased toward gly residues. 3 consecutive C3H1-type zinc fingers follow at residues 36 to 63 (ASSD…HPDM), 73 to 99 (KNEF…HGSK), and 134 to 161 (KEEV…HLQR). Arg185 and Arg186 each carry omega-N-methylarginine. Positions 196-207 (PDRGFEDHEPGP) are enriched in basic and acidic residues. The disordered stretch occupies residues 196-217 (PDRGFEDHEPGPKRRRGGCCPP). Positions 234 to 280 (GVECRLLEEENAMLRKRVEELKKQVSNLLATNEVLLEQNAQFRNQAK) form a coiled coil. Polar residues predominate over residues 314–330 (TTLSSQALQPRPVSQQE). The tract at residues 314-362 (TTLSSQALQPRPVSQQELVAPAGAPAAPPTNAAPPAAPPPPPPHLTPEI) is disordered. A compositionally biased stretch (pro residues) spans 339-358 (AAPPTNAAPPAAPPPPPPHL).

The protein resides in the nucleus. Its function is as follows. Specific regulator of miRNA biogenesis. Binds, via the C3H1-type zinc finger domains, to the binding motif 5'-GCAGCGC-3' on microRNA pri-MIR143 and negatively regulates the processing to mature microRNA. The sequence is that of Zinc finger CCCH domain-containing protein 10 (ZC3H10) from Homo sapiens (Human).